The chain runs to 151 residues: FUN14 domain-containing protein 2 (151 aa).

The Cytoplasmic portion of the chain corresponds to 1-42; the sequence is MAANSQGNFDGKFEALDLAELTKKQPWWRKLFGQESGPSAEK. The helical transmembrane segment at 43-63 threads the bilayer; that stretch reads YSVATQLVIGGVTGWCTGFVF. Residues 64 to 69 are Mitochondrial intermembrane-facing; it reads QKVGKL. Residues 70–90 traverse the membrane as a helical segment; the sequence is AATAVGGGFFLLQLANHTGYI. Over 91-126 the chain is Cytoplasmic; that stretch reads KVDWQRVEKDMKKAKEQLKIRKNKQIPTEVKSKAEE. Residues 127 to 147 traverse the membrane as a helical segment; that stretch reads VVSFVKKNVLVTGGFFGGFLL. Residues 148 to 151 are Mitochondrial intermembrane-facing; sequence GMAS.

The protein belongs to the FUN14 family. Highly expressed in platelet (at protein level). Expressed in liver, brain, heart and muscle.

The protein localises to the mitochondrion outer membrane. It is found in the nucleus. In terms of biological role, binds directly and specifically 1,2-Diacyl-sn-glycero-3-phospho-(1'-myo-inositol-3',4',5'-bisphosphate) (PIP3) leading to the recruitment of PIP3 to mitochondria and may play a role in the regulation of the platelet activation via AKT/GSK3B/cGMP signaling pathways. May act as transcription factor that regulates SREBP1 (isoform SREBP-1C) expression in order to modulate triglyceride (TG) homeostasis in hepatocytes. This is FUN14 domain-containing protein 2 from Mus musculus (Mouse).